We begin with the raw amino-acid sequence, 133 residues long: Transcription antitermination protein NusB (133 aa).

Belongs to the NusB family.

Its function is as follows. Involved in transcription antitermination. Required for transcription of ribosomal RNA (rRNA) genes. Binds specifically to the boxA antiterminator sequence of the ribosomal RNA (rrn) operons. The polypeptide is Transcription antitermination protein NusB (Clostridium botulinum (strain Alaska E43 / Type E3)).